The following is a 482-amino-acid chain: Vanillin dehydrogenase (482 aa).

Residue 228 to 233 coordinates NAD(+); that stretch reads GSTHVG. Residues E250 and C284 contribute to the active site.

This sequence belongs to the aldehyde dehydrogenase family.

It catalyses the reaction vanillin + NAD(+) + H2O = vanillate + NADH + 2 H(+). Its function is as follows. Catalyzes the NAD-dependent oxidation of vanillin to vanillic acid. This chain is Vanillin dehydrogenase (vdh), found in Pseudomonas fluorescens.